A 239-amino-acid chain; its full sequence is UPF0641 membrane protein YHR140W (239 aa).

Residues 1 to 11 lie on the Cytoplasmic side of the membrane; the sequence is MMSCLVPTRFT. The chain crosses the membrane as a helical span at residues 12–31; it reads LTLNTACLLTSTWGFVRATS. The Lumenal portion of the chain corresponds to 32–45; it reads VVLPPSLSKAGHKQ. The helical transmembrane segment at 46-66 threads the bilayer; sequence FLTIISIIATIINNAVNISNY. At 67–99 the chain is on the cytoplasmic side; the sequence is YIQRNNKMNLETKKKSDFISRHVTLPVSLVLES. A helical transmembrane segment spans residues 100–120; it reads IVATVYWPLRLFFVNLIMHGV. Residues 121-125 are Lumenal-facing; the sequence is ESTAK. The chain crosses the membrane as a helical span at residues 126–146; that stretch reads TPFPMTVDMAIHLYPILYLLA. Over 147 to 162 the chain is Cytoplasmic; that stretch reads DHYLSGSGTKFKLSNK. The chain crosses the membrane as a helical span at residues 163–183; sequence HAWLIVTSLAFSYFQYLAFLI. Topologically, residues 184–204 are lumenal; that stretch reads DAGQGQAYPYPFLDVNEPYKS. Residues 205–225 form a helical membrane-spanning segment; the sequence is IIFVVVATITWAYYVFYQKFP. Topologically, residues 226-239 are cytoplasmic; it reads PKYIKKSAKKGDKN.

Belongs to the UPF0641 family.

It is found in the endoplasmic reticulum membrane. The protein is UPF0641 membrane protein YHR140W of Saccharomyces cerevisiae (strain ATCC 204508 / S288c) (Baker's yeast).